Here is a 448-residue protein sequence, read N- to C-terminus: Oxysterol-binding protein homolog 6 (448 aa).

The interval 1-42 is disordered; the sequence is MGSKKLTVGSDSHRLSKSSFSSNKSSHSATKDQPIDTDDIDE. Serine 16 bears the Phosphoserine mark. Residues 17–28 are compositionally biased toward low complexity; the sequence is KSSFSSNKSSHS. The tract at residues 54 to 391 is OSBP-related domain (ORD); it reads IISQLRPGCD…PGEDLDYCIY (338 aa). A 1,2-diacyl-sn-glycero-3-phospho-(1D-myo-inositol 4-phosphate) contacts are provided by residues 64 to 69, 126 to 129, and 157 to 158; these read LTRITL, KPLN, and HH. A 1,2-diacyl-sn-glycero-3-phospho-L-serine-binding positions include 64 to 69 and asparagine 129; that span reads LTRITL. Serine 183 is an a 1,2-diacyl-sn-glycero-3-phospho-L-serine binding site. Lysine 351, glutamate 355, and arginine 359 together coordinate a 1,2-diacyl-sn-glycero-3-phospho-(1D-myo-inositol 4-phosphate).

The protein belongs to the OSBP family. As to quaternary structure, interacts with the AAA ATPase VPS4; regulates OSH6 membrane association. VPS4 is required for membrane dissociation of OSH6.

It localises to the cytoplasm. Its subcellular location is the cell membrane. It is found in the endoplasmic reticulum membrane. The enzyme catalyses a 1,2-diacyl-sn-glycero-3-phospho-L-serine(in) = a 1,2-diacyl-sn-glycero-3-phospho-L-serine(out). Lipid transport protein (LTP) involved in non-vesicular transfer of lipids between membranes. Functions in phosphoinositide-coupled directional transport of various lipids by carrying the lipid molecule in a hydrophobic pocket and transferring it between membranes through the cytosol. Involved in maintenance of intracellular sterol distribution and homeostasis. Catalyzes the lipid countertransport between the endoplasmic reticulum (ER) and the plasma membrane (PM). Specifically exchanges phosphatidylserine (PS) with phosphatidylinositol 4-phosphate (PI4P), delivering phosphatidylserine to the PM in exchange for PI4P, which is delivered to the ER-localized PI4P phosphatase SAC1 for degradation. Thus, by maintaining a PI4P gradient at the ER/PM interface, SAC1 drives PS transport. Binds phosphatidylserine and PI4P in a mutually exclusive manner. Also binds phosphatidic acid (PA). This chain is Oxysterol-binding protein homolog 6, found in Saccharomyces cerevisiae (strain ATCC 204508 / S288c) (Baker's yeast).